Consider the following 308-residue polypeptide: Aspartate carbamoyltransferase catalytic subunit (308 aa).

The carbamoyl phosphate site is built by arginine 59 and threonine 60. Lysine 87 contacts L-aspartate. Residues arginine 109, histidine 139, and glutamine 142 each coordinate carbamoyl phosphate. L-aspartate is bound by residues arginine 172 and arginine 224. Carbamoyl phosphate-binding residues include alanine 265 and proline 266.

Belongs to the aspartate/ornithine carbamoyltransferase superfamily. ATCase family. As to quaternary structure, heterododecamer (2C3:3R2) of six catalytic PyrB chains organized as two trimers (C3), and six regulatory PyrI chains organized as three dimers (R2).

The enzyme catalyses carbamoyl phosphate + L-aspartate = N-carbamoyl-L-aspartate + phosphate + H(+). The protein operates within pyrimidine metabolism; UMP biosynthesis via de novo pathway; (S)-dihydroorotate from bicarbonate: step 2/3. In terms of biological role, catalyzes the condensation of carbamoyl phosphate and aspartate to form carbamoyl aspartate and inorganic phosphate, the committed step in the de novo pyrimidine nucleotide biosynthesis pathway. In Enterococcus faecalis (strain ATCC 700802 / V583), this protein is Aspartate carbamoyltransferase catalytic subunit.